The following is a 314-amino-acid chain: tRNA pseudouridine synthase B (314 aa).

D54 serves as the catalytic Nucleophile.

Belongs to the pseudouridine synthase TruB family. Type 1 subfamily.

It carries out the reaction uridine(55) in tRNA = pseudouridine(55) in tRNA. Responsible for synthesis of pseudouridine from uracil-55 in the psi GC loop of transfer RNAs. This is tRNA pseudouridine synthase B from Ralstonia nicotianae (strain ATCC BAA-1114 / GMI1000) (Ralstonia solanacearum).